A 103-amino-acid chain; its full sequence is Phospholipase A2 large subunit (103 aa).

The Ca(2+) site is built by Trp-7, Gly-9, and Gly-11. Disulfide bonds link Cys-8-Cys-30, Cys-29-Cys-68, Cys-36-Cys-61, and Cys-59-Cys-96. Residue Asn-16 is glycosylated (N-linked (GlcNAc...) asparagine). Residue His-33 is part of the active site. Asp-34 provides a ligand contact to Ca(2+).

This sequence belongs to the phospholipase A2 family. Group III subfamily. Heterodimer composed of a large subunit and a small subunit; disulfide-linked. Requires Ca(2+) as cofactor. As to expression, expressed by the venom gland.

It is found in the secreted. The enzyme catalyses a 1,2-diacyl-sn-glycero-3-phosphocholine + H2O = a 1-acyl-sn-glycero-3-phosphocholine + a fatty acid + H(+). In terms of biological role, phospholipase toxin, which catalyzes the calcium-dependent hydrolysis of the 2-acyl groups in 3-sn-phosphoglycerides. Inhibits both skeletal (RYR1) and cardiac (RYR2) ryanodine receptors (calcium release channels). Probably blocks ryanodine receptors by generating a lipid product. This chain is Phospholipase A2 large subunit, found in Chersonesometrus fulvipes (Indian black scorpion).